The primary structure comprises 145 residues: Leghemoglobin-2 (145 aa).

The region spanning 3–145 (AFSDKQEGLV…ELAAAIKKAY (143 aa)) is the Globin domain. Residues Y26 and Y31 each carry the nitrated tyrosine modification. Residue S46 coordinates heme b. S46 carries the post-translational modification Phosphoserine. H62 contacts O2. Residues K65, H93, and K96 each contribute to the heme b site. Y134 is modified (nitrated tyrosine).

The protein belongs to the plant globin family. In terms of assembly, monomer. Post-translationally, nitrated in effective nodules and particularly in hypoxic conditions; this mechanism may play a protective role in the symbiosis by buffering toxic peroxynitrite NO(2)(-). Nitration level decrease during nodule senescence. Phosphorylation at Ser-46 disrupts the molecular environment of its porphyrin ring oxygen binding pocket, thus leading to a reduced oxygen consumption and to the delivery of oxygen O(2) to symbiosomes. Root nodules.

It is found in the cytoplasm. The protein resides in the cytosol. The protein localises to the nucleus. Leghemoglobin that reversibly binds oxygen O(2) through a pentacoordinated heme iron. In root nodules, facilitates the diffusion of oxygen to the bacteroids while preventing the bacterial nitrogenase from being inactivated by buffering dioxygen, nitric oxide and carbon monoxide, and promoting the formation of reactive oxygen species (ROS, e.g. H(2)O(2)). This role is essential for symbiotic nitrogen fixation (SNF). This Vigna unguiculata (Cowpea) protein is Leghemoglobin-2.